We begin with the raw amino-acid sequence, 108 residues long: MGVEIETISPGDGRTFPKKGQICVVHYTGMLQNGKKFDSSRDRNKPFKFRIGKQEVIKGFEEGTAQMSLGQRAKLTCTPDVAYGATGHPGVIPPNATLIFDVELLSLE.

In terms of domain architecture, PPIase FKBP-type spans 20 to 108; that stretch reads GQICVVHYTG…IFDVELLSLE (89 aa).

The protein belongs to the FKBP-type PPIase family. FKBP1 subfamily. As to quaternary structure, identified in a complex composed of RYR2, FKBP1B, PKA catalytic subunit, PRKAR2A, AKAP6, and the protein phosphatases PP2A and PP1. Interacts directly with RYR2.

It is found in the cytoplasm. It localises to the sarcoplasmic reticulum. It carries out the reaction [protein]-peptidylproline (omega=180) = [protein]-peptidylproline (omega=0). Inhibited by both FK506 and rapamycin. Its function is as follows. Has the potential to contribute to the immunosuppressive and toxic effects of FK506 and rapamycin. PPIases accelerate the folding of proteins. It catalyzes the cis-trans isomerization of proline imidic peptide bonds in oligopeptides. The chain is Peptidyl-prolyl cis-trans isomerase FKBP1B (Fkbp1b) from Mus musculus (Mouse).